The primary structure comprises 356 residues: DNA-directed RNA polymerase subunit alpha (356 aa).

The interval 1 to 259 (MIKAAATLKS…KLMTACLTTL (259 aa)) is alpha N-terminal domain (alpha-NTD). The alpha C-terminal domain (alpha-CTD) stretch occupies residues 277-356 (FVQVNYNKME…STYGIELKED (80 aa)).

The protein belongs to the RNA polymerase alpha chain family. As to quaternary structure, in plastids the minimal PEP RNA polymerase catalytic core is composed of four subunits: alpha, beta, beta', and beta''. When a (nuclear-encoded) sigma factor is associated with the core the holoenzyme is formed, which can initiate transcription.

Its subcellular location is the plastid. It is found in the chloroplast. The enzyme catalyses RNA(n) + a ribonucleoside 5'-triphosphate = RNA(n+1) + diphosphate. Its function is as follows. DNA-dependent RNA polymerase catalyzes the transcription of DNA into RNA using the four ribonucleoside triphosphates as substrates. The sequence is that of DNA-directed RNA polymerase subunit alpha from Ostreococcus tauri.